Consider the following 210-residue polypeptide: Holliday junction resolvase RecU (210 aa).

Mg(2+) contacts are provided by Thr-93, Asp-95, Glu-108, and Gln-127.

Belongs to the RecU family. It depends on Mg(2+) as a cofactor.

The protein resides in the cytoplasm. The enzyme catalyses Endonucleolytic cleavage at a junction such as a reciprocal single-stranded crossover between two homologous DNA duplexes (Holliday junction).. Endonuclease that resolves Holliday junction intermediates in genetic recombination. Cleaves mobile four-strand junctions by introducing symmetrical nicks in paired strands. Promotes annealing of linear ssDNA with homologous dsDNA. Required for DNA repair, homologous recombination and chromosome segregation. The sequence is that of Holliday junction resolvase RecU from Lactobacillus helveticus (strain DPC 4571).